We begin with the raw amino-acid sequence, 375 residues long: Chaperone protein DnaJ (375 aa).

The 66-residue stretch at 5–70 folds into the J domain; that stretch reads DYYEVLGVNR…QKKGAYDRYG (66 aa). Residues 134 to 212 form a CR-type zinc finger; that stretch reads GAEKTIRIPT…CGGAGRVKKQ (79 aa). Residues cysteine 147, cysteine 150, cysteine 164, cysteine 167, cysteine 186, cysteine 189, cysteine 200, and cysteine 203 each contribute to the Zn(2+) site. CXXCXGXG motif repeat units follow at residues 147 to 154, 164 to 171, 186 to 193, and 200 to 207; these read CGTCHGSG, CPTCGGAG, CPKCHGTG, and CGDCGGAG.

It belongs to the DnaJ family. As to quaternary structure, homodimer. Zn(2+) serves as cofactor.

It is found in the cytoplasm. Its function is as follows. Participates actively in the response to hyperosmotic and heat shock by preventing the aggregation of stress-denatured proteins and by disaggregating proteins, also in an autonomous, DnaK-independent fashion. Unfolded proteins bind initially to DnaJ; upon interaction with the DnaJ-bound protein, DnaK hydrolyzes its bound ATP, resulting in the formation of a stable complex. GrpE releases ADP from DnaK; ATP binding to DnaK triggers the release of the substrate protein, thus completing the reaction cycle. Several rounds of ATP-dependent interactions between DnaJ, DnaK and GrpE are required for fully efficient folding. Also involved, together with DnaK and GrpE, in the DNA replication of plasmids through activation of initiation proteins. The protein is Chaperone protein DnaJ of Azoarcus sp. (strain BH72).